A 261-amino-acid chain; its full sequence is Cytochrome c oxidase subunit 3 (261 aa).

Topologically, residues 1–15 (MTHQTHAYHMVNPSP) are mitochondrial matrix. A helical transmembrane segment spans residues 16–34 (WPLTGALSALLMTSGLIMW). Topologically, residues 35–40 (FHFNSM) are mitochondrial intermembrane. Residues 41-66 (YLLMLGLTTNTLTMYQWWRDIVREST) traverse the membrane as a helical segment. Over 67 to 72 (FQGHHT) the chain is Mitochondrial matrix. The chain crosses the membrane as a helical span at residues 73-105 (PIVQKGLRYGMILFIVSEVFFFAGFFWAFYHSS). Residues 106–128 (LAPTPELGGCWPPTGITPLNPME) lie on the Mitochondrial intermembrane side of the membrane. The chain crosses the membrane as a helical span at residues 129 to 152 (VPLLNTSVLLASGVSITWAHHSLM). The Mitochondrial matrix segment spans residues 153 to 155 (EGN). A helical transmembrane segment spans residues 156–183 (RKHMLQALFITISLGIYFTLLQASEYYE). Residues 184–190 (TPFTISD) lie on the Mitochondrial intermembrane side of the membrane. The helical transmembrane segment at 191-223 (GIYGSTFFMATGFHGLHVIIGSTFLIVCFVRQL) threads the bilayer. Residues 224 to 232 (KFHFTSNHH) are Mitochondrial matrix-facing. The chain crosses the membrane as a helical span at residues 233–256 (FGFEAAAWYWHFVDVVWLFLYVSI). Topologically, residues 257–261 (YWWGS) are mitochondrial intermembrane.

Belongs to the cytochrome c oxidase subunit 3 family. As to quaternary structure, component of the cytochrome c oxidase (complex IV, CIV), a multisubunit enzyme composed of 14 subunits. The complex is composed of a catalytic core of 3 subunits MT-CO1, MT-CO2 and MT-CO3, encoded in the mitochondrial DNA, and 11 supernumerary subunits COX4I, COX5A, COX5B, COX6A, COX6B, COX6C, COX7A, COX7B, COX7C, COX8 and NDUFA4, which are encoded in the nuclear genome. The complex exists as a monomer or a dimer and forms supercomplexes (SCs) in the inner mitochondrial membrane with NADH-ubiquinone oxidoreductase (complex I, CI) and ubiquinol-cytochrome c oxidoreductase (cytochrome b-c1 complex, complex III, CIII), resulting in different assemblies (supercomplex SCI(1)III(2)IV(1) and megacomplex MCI(2)III(2)IV(2)).

Its subcellular location is the mitochondrion inner membrane. The catalysed reaction is 4 Fe(II)-[cytochrome c] + O2 + 8 H(+)(in) = 4 Fe(III)-[cytochrome c] + 2 H2O + 4 H(+)(out). In terms of biological role, component of the cytochrome c oxidase, the last enzyme in the mitochondrial electron transport chain which drives oxidative phosphorylation. The respiratory chain contains 3 multisubunit complexes succinate dehydrogenase (complex II, CII), ubiquinol-cytochrome c oxidoreductase (cytochrome b-c1 complex, complex III, CIII) and cytochrome c oxidase (complex IV, CIV), that cooperate to transfer electrons derived from NADH and succinate to molecular oxygen, creating an electrochemical gradient over the inner membrane that drives transmembrane transport and the ATP synthase. Cytochrome c oxidase is the component of the respiratory chain that catalyzes the reduction of oxygen to water. Electrons originating from reduced cytochrome c in the intermembrane space (IMS) are transferred via the dinuclear copper A center (CU(A)) of subunit 2 and heme A of subunit 1 to the active site in subunit 1, a binuclear center (BNC) formed by heme A3 and copper B (CU(B)). The BNC reduces molecular oxygen to 2 water molecules using 4 electrons from cytochrome c in the IMS and 4 protons from the mitochondrial matrix. This Phoca vitulina (Harbor seal) protein is Cytochrome c oxidase subunit 3 (MT-CO3).